Here is a 1139-residue protein sequence, read N- to C-terminus: Integrin alpha ina-1 (1139 aa).

The N-terminal stretch at 1–19 (MRECIISWTLLLCLSCVKS) is a signal peptide. At 20 to 1084 (FNLDVNAPIY…PTIGDSRPIP (1065 aa)) the chain is on the extracellular side. Residues 21-85 (NLDVNAPIYR…CDINTFYNGG (65 aa)) form an FG-GAP 1 repeat. Asn-108 and Asn-136 each carry an N-linked (GlcNAc...) asparagine glycan. 6 FG-GAP repeats span residues 111–171 (RGRT…LQST), 180–231 (LPTT…IFDS), 242–302 (NGDM…SSSK), 307–370 (EDKF…QRKQ), 378–438 (HPPK…IEKF), and 448–510 (GNDL…MEKR). Residue Asn-313 is glycosylated (N-linked (GlcNAc...) asparagine). Asn-580, Asn-788, Asn-851, and Asn-1026 each carry an N-linked (GlcNAc...) asparagine glycan. Residues 1085 to 1106 (WWIYVIAAVIGVLILSLIIICL) form a helical membrane-spanning segment. The Cytoplasmic segment spans residues 1107 to 1139 (SKCGFFKRNRLDQPSLYTAQLKHEREEWADTGL).

This sequence belongs to the integrin alpha chain family. As to quaternary structure, heterodimer of an alpha and a beta subunit. Alpha ina-1 associates with beta pat-3. Interacts (via cytoplasmic domain) with src-1 (when phosphorylated at 'Tyr-416').

It is found in the membrane. It localises to the cell projection. The protein localises to the phagocytic cup. The protein resides in the cytoplasmic vesicle. Its subcellular location is the phagosome membrane. Its function is as follows. Plays a role in cell migration, axon fasciculation, and morphogenesis. During gonad morphogenesis, involved in distal tip cell (DTC)-mediated guidance of gonad elongation, in maintaining their sharp tapering morphology and in their migration. Involved in the anterior-posterior positioning of QR neuroblast descendants by regulating the migratory speed of QR.p. Probably by acting as a receptor for apoptotic cells, plays a role in the clearance of apoptotic cells during mid-embryogenesis. The protein is Integrin alpha ina-1 (ina-1) of Caenorhabditis elegans.